The following is a 270-amino-acid chain: MRTAFYISDGTAITAEVFGHALLSLFPVSFNHNTIPFVETEEQAHKVLQQISESFQDTGERPLVFYTIVNVDVRKIISKSVGINYNFLDQFVAPLEKVLGVPSKPEKHRTHSIHETTYDIRIEAVNYALANDDGSNLKDYDEADIILTGVSRSGKTPTSLYLALQYGIKAANYPFTEEDMGDMLKLPPTLRRYKHKLFGLTIAADRLHQIRSERRANSKYASIQQCRMELREVENLYRKEKIPFLNSTKYSIEEISAKILAETGLKRRKY.

An ADP-binding site is contributed by 149-156 (GVSRSGKT).

It belongs to the pyruvate, phosphate/water dikinase regulatory protein family. PSRP subfamily.

It catalyses the reaction [pyruvate, water dikinase] + ADP = [pyruvate, water dikinase]-phosphate + AMP + H(+). It carries out the reaction [pyruvate, water dikinase]-phosphate + phosphate + H(+) = [pyruvate, water dikinase] + diphosphate. Its function is as follows. Bifunctional serine/threonine kinase and phosphorylase involved in the regulation of the phosphoenolpyruvate synthase (PEPS) by catalyzing its phosphorylation/dephosphorylation. The polypeptide is Putative phosphoenolpyruvate synthase regulatory protein (Alteromonas mediterranea (strain DSM 17117 / CIP 110805 / LMG 28347 / Deep ecotype)).